The primary structure comprises 199 residues: Recombination protein RecR (199 aa).

The segment at 58-73 (CSVCFTLSDTPVCAIC) adopts a C4-type zinc-finger fold. The Toprim domain occupies 81–176 (SLLCVVEGPT…TVTRIASGMP (96 aa)).

Belongs to the RecR family.

In terms of biological role, may play a role in DNA repair. It seems to be involved in an RecBC-independent recombinational process of DNA repair. It may act with RecF and RecO. The chain is Recombination protein RecR from Desulfosudis oleivorans (strain DSM 6200 / JCM 39069 / Hxd3) (Desulfococcus oleovorans).